Consider the following 595-residue polypeptide: MFS-type transporter phomT (595 aa).

Residues 1–11 show a composition bias toward basic and acidic residues; the sequence is MESDGKSDRTK. The interval 1–62 is disordered; it reads MESDGKSDRT…HVSADDGPVD (62 aa). The segment covering 30-48 has biased composition (polar residues); that stretch reads PGHSTDTEGNGSDNNNTQV. Residues asparagine 39 and asparagine 44 are each glycosylated (N-linked (GlcNAc...) asparagine). Helical transmembrane passes span 91–111, 126–146, and 156–176; these read IILL…TIVA, DVGW…LFFG, and WVFL…GVAP. Asparagine 177 carries N-linked (GlcNAc...) asparagine glycosylation. A run of 3 helical transmembrane segments spans residues 186-206, 217-237, and 245-265; these read AVAG…IAFS, ALIS…GGVF, and WCFY…VFFL. Asparagine 277 carries an N-linked (GlcNAc...) asparagine glycan. Transmembrane regions (helical) follow at residues 290-310, 320-340, 362-382, 409-429, 451-471, 483-503, and 559-579; these read IGTA…QWGG, VVAL…LQFW, VFTG…PIWF, IVGG…YALP, WIGY…QGIV, AIGT…FVSV, and VIWT…AVIF.

It belongs to the major facilitator superfamily. TCR/Tet family.

Its subcellular location is the cell membrane. MFS-type transporter; part of the gene cluster that mediates the biosynthesis of the phomopsins, a group of hexapeptide mycotoxins which infects lupins and causes lupinosis disease in livestock. PhomT is likely to be involved in the cellular export of phomopsins. The protein is MFS-type transporter phomT of Diaporthe leptostromiformis (Lupinosis disease fungus).